Consider the following 732-residue polypeptide: Polyadenylate-binding protein, cytoplasmic and nuclear (732 aa).

A compositionally biased stretch (polar residues) spans Met-1–Pro-19. The tract at residues Met-1–Glu-26 is disordered. RRM domains lie at Ala-42–Arg-120, Gly-130–Ser-207, Thr-223–Lys-300, and Val-326–Arg-454. 2 disordered regions span residues Val-357–Leu-413 and Met-706–Ala-732. The span at Ser-371–Pro-412 shows a compositional bias: basic and acidic residues. The 78-residue stretch at Val-630–Lys-707 folds into the PABC domain.

The protein belongs to the polyadenylate-binding protein type-1 family.

It localises to the cytoplasm. The protein localises to the nucleus. Binds the poly(A) tail of mRNA. Appears to be an important mediator of the multiple roles of the poly(A) tail in mRNA biogenesis, stability and translation. In the nucleus, involved in both mRNA cleavage and polyadenylation. Is also required for efficient mRNA export to the cytoplasm. Acts in concert with a poly(A)-specific nuclease (PAN) to affect poly(A) tail shortening, which may occur concomitantly with either nucleocytoplasmic mRNA transport or translational initiation. In the cytoplasm, stimulates translation initiation and regulates mRNA decay through translation termination-coupled poly(A) shortening, probably mediated by PAN. The sequence is that of Polyadenylate-binding protein, cytoplasmic and nuclear (pab1) from Emericella nidulans (strain FGSC A4 / ATCC 38163 / CBS 112.46 / NRRL 194 / M139) (Aspergillus nidulans).